We begin with the raw amino-acid sequence, 482 residues long: MASKDDAGTSNVVTRFAPSPTGYLHLGGARTALFNWLFARHYGGKALLRIEDTDKKRSTQDAIDKILEGLDWLGLDYDDTPLFQSERGSRHVEVAEKLLEYGYAYRCYATQEELEQMRAAQRAAKQPQRYDGRWRHRDASEAPAGSPFVVRLKTAEDGETTIEDKVQGRVTVRNEELDDYILLRADGSPTYMLAVVVDDHDMGVTHVIRGDDHLNNAFRQLPIYHAMDTIEGGWPEPVYAHVPLIHGQDGAKLSKRHGAVGVEAYRDEMGVLPEALFNYLLRLGWGHGDQEEFTREQAIELFTLEGVGKSASRFDTKKLLNLNGHHIREADNARLAALVAAKIGPAADEALLTQAMEVLKVRAKDINELAEGAAFLFSKRPLEMTEKAEKLLDGEGRERLAKVSEALSAENDWTIEALEATTKALAERLELGLGKLAQPMRAALTGTTTSPGIFDVLVLLGREESLARIDAQATPAEEGANG.

Positions 18–28 (PSPTGYLHLGG) match the 'HIGH' region motif. Residues 252-256 (KLSKR) carry the 'KMSKS' region motif. An ATP-binding site is contributed by K255.

Belongs to the class-I aminoacyl-tRNA synthetase family. Glutamate--tRNA ligase type 1 subfamily. In terms of assembly, monomer.

The protein localises to the cytoplasm. The catalysed reaction is tRNA(Glu) + L-glutamate + ATP = L-glutamyl-tRNA(Glu) + AMP + diphosphate. Its function is as follows. Catalyzes the attachment of glutamate to tRNA(Glu) in a two-step reaction: glutamate is first activated by ATP to form Glu-AMP and then transferred to the acceptor end of tRNA(Glu). This chain is Glutamate--tRNA ligase 1, found in Erythrobacter litoralis (strain HTCC2594).